Here is a 67-residue protein sequence, read N- to C-terminus: Large ribosomal subunit protein bL32c (67 aa).

It belongs to the bacterial ribosomal protein bL32 family.

The protein resides in the plastid. It localises to the chloroplast. In Chara vulgaris (Common stonewort), this protein is Large ribosomal subunit protein bL32c.